The following is a 68-amino-acid chain: Large ribosomal subunit protein uL29 (68 aa).

Belongs to the universal ribosomal protein uL29 family.

The polypeptide is Large ribosomal subunit protein uL29 (Chlorobaculum tepidum (strain ATCC 49652 / DSM 12025 / NBRC 103806 / TLS) (Chlorobium tepidum)).